A 62-amino-acid polypeptide reads, in one-letter code: Photosystem II reaction center protein Z (62 aa).

2 helical membrane-spanning segments follow: residues 8–28 (AVFA…VVFA) and 41–61 (FSGT…NSLI).

It belongs to the PsbZ family. PSII is composed of 1 copy each of membrane proteins PsbA, PsbB, PsbC, PsbD, PsbE, PsbF, PsbH, PsbI, PsbJ, PsbK, PsbL, PsbM, PsbT, PsbY, PsbZ, Psb30/Ycf12, at least 3 peripheral proteins of the oxygen-evolving complex and a large number of cofactors. It forms dimeric complexes.

It is found in the plastid. Its subcellular location is the chloroplast thylakoid membrane. May control the interaction of photosystem II (PSII) cores with the light-harvesting antenna, regulates electron flow through the 2 photosystem reaction centers. PSII is a light-driven water plastoquinone oxidoreductase, using light energy to abstract electrons from H(2)O, generating a proton gradient subsequently used for ATP formation. This Arabidopsis thaliana (Mouse-ear cress) protein is Photosystem II reaction center protein Z.